The primary structure comprises 105 residues: Small ribosomal subunit protein uS10 (105 aa).

This sequence belongs to the universal ribosomal protein uS10 family. As to quaternary structure, part of the 30S ribosomal subunit.

Its function is as follows. Involved in the binding of tRNA to the ribosomes. The polypeptide is Small ribosomal subunit protein uS10 (Crocosphaera subtropica (strain ATCC 51142 / BH68) (Cyanothece sp. (strain ATCC 51142))).